We begin with the raw amino-acid sequence, 237 residues long: Large ribosomal subunit protein uL1 (237 aa).

This sequence belongs to the universal ribosomal protein uL1 family. As to quaternary structure, part of the 50S ribosomal subunit.

Its function is as follows. Binds directly to 23S rRNA. The L1 stalk is quite mobile in the ribosome, and is involved in E site tRNA release. Protein L1 is also a translational repressor protein, it controls the translation of the L11 operon by binding to its mRNA. This is Large ribosomal subunit protein uL1 from Dehalococcoides mccartyi (strain CBDB1).